The primary structure comprises 326 residues: Tagatose 1,6-diphosphate aldolase (326 aa).

This sequence belongs to the aldolase LacD family.

It carries out the reaction D-tagatofuranose 1,6-bisphosphate = D-glyceraldehyde 3-phosphate + dihydroxyacetone phosphate. The protein operates within carbohydrate metabolism; D-tagatose 6-phosphate degradation; D-glyceraldehyde 3-phosphate and glycerone phosphate from D-tagatose 6-phosphate: step 2/2. This Staphylococcus aureus (strain MSSA476) protein is Tagatose 1,6-diphosphate aldolase.